The sequence spans 507 residues: Rhomboid protease GluP (507 aa).

The next 5 helical transmembrane spans lie at 179-199 (FTYL…INGG), 229-249 (IVLH…WSVG), 261-281 (FLLI…VFSP), 283-303 (PSAG…YVAL), and 312-332 (TIGT…FAVS). The active-site Nucleophile is the Ser-288. The active-site Charge relay system is the His-339. Transmembrane regions (helical) follow at residues 340 to 360 (IGGL…KAGA) and 365 to 385 (LLSA…GLHS). 2 TPR repeats span residues 424–457 (ADLL…EPKD) and 458–491 (HASY…KPKE).

Belongs to the peptidase S54 family.

Its subcellular location is the cell membrane. The enzyme catalyses Cleaves type-1 transmembrane domains using a catalytic dyad composed of serine and histidine that are contributed by different transmembrane domains.. Inhibited by dichloroisocoumarin (DCI) and N-p-tosyl-L-phenylalanine chloromethyl ketone (TPCK), but not by other serine protease inhibitors such as sulfonyl fluoride PMSF and 4-(2-aminoethyl)benzenesulfonyl fluoride (AEBSF). Rhomboid-type serine protease that catalyzes intramembrane proteolysis. Important for normal cell division and sporulation. May act as a glucose exporter. In Bacillus subtilis (strain 168), this protein is Rhomboid protease GluP (gluP).